Reading from the N-terminus, the 90-residue chain is Chaplin-G (90 aa).

Residues 1 to 27 (MSRIAKAAGVALGTGAVVLSGTGMAMA) form the signal peptide. Residues 38 to 78 (SPGVLSGNVVQVPVHVPVNLCGNTIDVIGLLNPAFGNACEN) form the Chaplin domain. A disulfide bridge links cysteine 58 with cysteine 76.

This sequence belongs to the chaplin family. Short chaplin subfamily.

It is found in the cell surface. The protein localises to the secreted. Its subcellular location is the cell wall. Functionally, one of 8 partially redundant surface-active proteins required for efficient formation of aerial mycelium; the short chaplins assemble into a hydrophobic, amyloidal fibrillar surface layer that envelopes and protects aerial hyphae and spores, presumably anchored to the long chaplins. Chaplins have an overlapping function with the surface-active SapB peptide; chaplins are essential on minimal medium while on rich medium both chaplins and SapB are required for efficient aerial hyphae formation. Chaplins are also involved in cell attachment to a hydrophobic surface. Forms amyloid fibrils in vitro probably composed of stacked beta-sheets, at low extracellular concentrations individually restores the ability to form aerial hyphae to a chaplin-deficient strain. A small chaplin extract (ChpD, ChpE, ChpF, ChpG and ChpH) self-assembles into 2 different amyloids; small fibrils at the air-water interface form an amphipathic membrane that resembles spore-surface structures involved in aerial hyphae formation, and hydrophilic fibrils in solution that resemble the fibers that attach cells to a hydrophobic surface. At the air-water interface the hydrophilic surface is in contact with water (probably equivalent to the peptidoglycan layer), while the hydrophobic face is exposed to the air, making the surface of the aerial hyphae hydrophobic. A small chaplin extract applied to a chaplin-deficient strain restores aerial hyphae formation. The small chaplin extract forms an amyloid-like structure similar to that seen on the surface of cells without rodlets (rdlA-rdlB deletions), and is highly surface active, reducing surface tension from 72 to 26 mJ/m(2), which probably allows escape of hyphae from an aqueous environment into air. ChpF and ChpG are sufficient to restore the rodlet layer and hydrophobicity to a strain deleted for the other 6 chaplin genes. The chain is Chaplin-G from Streptomyces coelicolor (strain ATCC BAA-471 / A3(2) / M145).